A 103-amino-acid chain; its full sequence is Large ribosomal subunit protein bL21 (103 aa).

Belongs to the bacterial ribosomal protein bL21 family. As to quaternary structure, part of the 50S ribosomal subunit. Contacts protein L20.

This protein binds to 23S rRNA in the presence of protein L20. The sequence is that of Large ribosomal subunit protein bL21 from Serratia proteamaculans (strain 568).